A 576-amino-acid polypeptide reads, in one-letter code: Putative ankyrin repeat protein L86 (576 aa).

ANK repeat units follow at residues 68 to 101, 118 to 147, 159 to 188, 192 to 223, 227 to 260, 264 to 300, 304 to 337, 341 to 373, 377 to 408, 412 to 446, and 448 to 480; these read HGWTALMIASVTSSYWCTIDTVKLLLENGADPNI, TRINCLEINQRTNFLKTAQLLIEYGANVNF, SGGFILNSSLQYNNFDIIKILLDNNTNPNI, KGNTLLHNICIYNQSCDDIIKLLLNYNVDLNS, KRKTVLMYLCKFYNKTNNVNSIKLLLKNGANPNI, KGNTAMMYLFNKFYHEYGDNKYNIIKLLLQYGANPNI, SGISVLLRASTIQNGWERKNIIKFLLKHGADPNI, QGLTFLMLLVKNPQNHMTKEFLNFVLKYVDPNI, KGKNILHYIPSESIDSPDILKRLLEFTTNPNA, KGRTPLMLACKKFTSTNDIVKINLLVEYSVISLTD, and NGKKALDYAMNNTSNIRLFMVSILLEKGDTFDV.

In Acanthamoeba polyphaga mimivirus (APMV), this protein is Putative ankyrin repeat protein L86.